A 302-amino-acid polypeptide reads, in one-letter code: Acetylglutamate kinase (302 aa).

Substrate is bound by residues 55–56 (GG), R77, and N176.

It belongs to the acetylglutamate kinase family. ArgB subfamily.

The protein localises to the cytoplasm. The catalysed reaction is N-acetyl-L-glutamate + ATP = N-acetyl-L-glutamyl 5-phosphate + ADP. The protein operates within amino-acid biosynthesis; L-arginine biosynthesis; N(2)-acetyl-L-ornithine from L-glutamate: step 2/4. Its function is as follows. Catalyzes the ATP-dependent phosphorylation of N-acetyl-L-glutamate. This chain is Acetylglutamate kinase, found in Corynebacterium efficiens (strain DSM 44549 / YS-314 / AJ 12310 / JCM 11189 / NBRC 100395).